The chain runs to 441 residues: Arginine biosynthesis bifunctional protein ArgJ, mitochondrial (441 aa).

Substrate-binding residues include T177, K204, T215, E301, N436, and S441. The active-site Nucleophile is T215.

It belongs to the ArgJ family. In terms of assembly, heterodimer of an alpha and a beta chain. In terms of processing, the alpha and beta chains are autoproteolytically processed from a single precursor protein within the mitochondrion.

It is found in the mitochondrion matrix. It carries out the reaction N(2)-acetyl-L-ornithine + L-glutamate = N-acetyl-L-glutamate + L-ornithine. The enzyme catalyses L-glutamate + acetyl-CoA = N-acetyl-L-glutamate + CoA + H(+). It functions in the pathway amino-acid biosynthesis; L-arginine biosynthesis; L-ornithine and N-acetyl-L-glutamate from L-glutamate and N(2)-acetyl-L-ornithine (cyclic): step 1/1. It participates in amino-acid biosynthesis; L-arginine biosynthesis; N(2)-acetyl-L-ornithine from L-glutamate: step 1/4. Catalyzes two activities which are involved in the cyclic version of arginine biosynthesis: the synthesis of acetylglutamate from glutamate and acetyl-CoA, and of ornithine by transacetylation between acetylornithine and glutamate. This Lachancea thermotolerans (strain ATCC 56472 / CBS 6340 / NRRL Y-8284) (Yeast) protein is Arginine biosynthesis bifunctional protein ArgJ, mitochondrial.